The sequence spans 509 residues: GMP synthase [glutamine-hydrolyzing] (509 aa).

In terms of domain architecture, Glutamine amidotransferase type-1 spans 4–193 (NVLILDFGSQ…LVKIAQVPQN (190 aa)). Cys79 acts as the Nucleophile in catalysis. Residues His167 and Glu169 contribute to the active site. Residues 194–384 (FTPNAFVSDM…LGIDAELLGR (191 aa)) enclose the GMPS ATP-PPase domain. ATP is bound at residue 221 to 227 (SGGVDST).

In terms of assembly, homodimer.

The catalysed reaction is XMP + L-glutamine + ATP + H2O = GMP + L-glutamate + AMP + diphosphate + 2 H(+). It participates in purine metabolism; GMP biosynthesis; GMP from XMP (L-Gln route): step 1/1. Its function is as follows. Catalyzes the synthesis of GMP from XMP. In Flavobacterium psychrophilum (strain ATCC 49511 / DSM 21280 / CIP 103535 / JIP02/86), this protein is GMP synthase [glutamine-hydrolyzing].